Reading from the N-terminus, the 360-residue chain is Cell division protein DivIB (360 aa).

Positions 1–54 (MTEKDSNVEESVLEVEQASQVELDSEQISPAEKESVLAEEKEFSTDVDIPEMTA) are disordered. Residues 1-139 (MTEKDSNVEE…VDIPSKVVWK (139 aa)) lie on the Cytoplasmic side of the membrane. A compositionally biased stretch (polar residues) spans 17 to 28 (QASQVELDSEQI). Basic and acidic residues predominate over residues 31–44 (AEKESVLAEEKEFS). The helical transmembrane segment at 140 to 160 (AIPVLVTSLLLAALALYFISP) threads the bilayer. At 161-360 (TSKKKQIEVV…MEVGIYRYAS (200 aa)) the chain is on the extracellular side. A POTRA domain is found at 162-233 (SKKKQIEVVG…ATFTIHIKEY (72 aa)).

The protein belongs to the FtsQ/DivIB family. DivIB subfamily.

It localises to the cell membrane. Functionally, cell division protein that may be involved in stabilizing or promoting the assembly of the division complex. In Streptococcus suis (strain GZ1), this protein is Cell division protein DivIB.